The chain runs to 208 residues: Transmembrane protein 160 (208 aa).

The transit peptide at 1–45 directs the protein to the mitochondrion; the sequence is MASIRWLMGSRLSRFVCPFAQLVRQPVLRYVRPPVRALHRGSVRR. 3 helical membrane passes run 82 to 102, 110 to 130, and 147 to 167; these read GFLS…IAFV, AGYA…ASYV, and VLLH…AVSL. Residues 181-192 are compositionally biased toward acidic residues; that stretch reads DDEEHGADESSE. Positions 181 to 208 are disordered; sequence DDEEHGADESSECAECRARRDREKGQDK. A compositionally biased stretch (basic and acidic residues) spans 194–208; sequence AECRARRDREKGQDK.

The protein belongs to the TMEM160 family.

The protein resides in the mitochondrion inner membrane. The chain is Transmembrane protein 160 from Danio rerio (Zebrafish).